A 117-amino-acid chain; its full sequence is Iron-sulfur cluster insertion protein ErpA (117 aa).

Iron-sulfur cluster-binding residues include C45, C109, and C111.

It belongs to the HesB/IscA family. As to quaternary structure, homodimer. It depends on iron-sulfur cluster as a cofactor.

Its function is as follows. Required for insertion of 4Fe-4S clusters for at least IspG. In Chromohalobacter salexigens (strain ATCC BAA-138 / DSM 3043 / CIP 106854 / NCIMB 13768 / 1H11), this protein is Iron-sulfur cluster insertion protein ErpA.